The sequence spans 288 residues: Bis(5'-nucleosyl)-tetraphosphatase, symmetrical (288 aa).

This sequence belongs to the Ap4A hydrolase family.

It catalyses the reaction P(1),P(4)-bis(5'-adenosyl) tetraphosphate + H2O = 2 ADP + 2 H(+). Functionally, hydrolyzes diadenosine 5',5'''-P1,P4-tetraphosphate to yield ADP. The polypeptide is Bis(5'-nucleosyl)-tetraphosphatase, symmetrical (Pseudomonas putida (strain GB-1)).